The following is a 325-amino-acid chain: tRNA U34 carboxymethyltransferase (325 aa).

7 residues coordinate carboxy-S-adenosyl-L-methionine: K93, W107, K112, G132, M198, Y202, and R317.

It belongs to the class I-like SAM-binding methyltransferase superfamily. CmoB family. As to quaternary structure, homotetramer.

The catalysed reaction is carboxy-S-adenosyl-L-methionine + 5-hydroxyuridine(34) in tRNA = 5-carboxymethoxyuridine(34) in tRNA + S-adenosyl-L-homocysteine + H(+). Its function is as follows. Catalyzes carboxymethyl transfer from carboxy-S-adenosyl-L-methionine (Cx-SAM) to 5-hydroxyuridine (ho5U) to form 5-carboxymethoxyuridine (cmo5U) at position 34 in tRNAs. In Desulforapulum autotrophicum (strain ATCC 43914 / DSM 3382 / VKM B-1955 / HRM2) (Desulfobacterium autotrophicum), this protein is tRNA U34 carboxymethyltransferase.